The primary structure comprises 343 residues: Ion-translocating oxidoreductase complex subunit D (343 aa).

4 helical membrane passes run valine 24 to leucine 44, tyrosine 45 to arginine 65, leucine 69 to proline 91, and alanine 124 to alanine 144. An FMN phosphoryl threonine modification is found at threonine 171. A run of 5 helical transmembrane segments spans residues phenylalanine 197–leucine 217, leucine 221–phenylalanine 241, glycine 251–threonine 271, leucine 284–proline 304, and aspartate 305–threonine 325.

This sequence belongs to the NqrB/RnfD family. In terms of assembly, the complex is composed of six subunits: RnfA, RnfB, RnfC, RnfD, RnfE and RnfG. The cofactor is FMN.

It localises to the cell inner membrane. In terms of biological role, part of a membrane-bound complex that couples electron transfer with translocation of ions across the membrane. This is Ion-translocating oxidoreductase complex subunit D from Ectopseudomonas mendocina (strain ymp) (Pseudomonas mendocina).